The chain runs to 448 residues: Phosphoglucosamine mutase (448 aa).

Residue serine 100 is the Phosphoserine intermediate of the active site. Mg(2+)-binding residues include serine 100, aspartate 240, aspartate 242, and aspartate 244. At serine 100 the chain carries Phosphoserine.

The protein belongs to the phosphohexose mutase family. The cofactor is Mg(2+). Activated by phosphorylation.

The enzyme catalyses alpha-D-glucosamine 1-phosphate = D-glucosamine 6-phosphate. In terms of biological role, catalyzes the conversion of glucosamine-6-phosphate to glucosamine-1-phosphate. This Bacillus anthracis (strain A0248) protein is Phosphoglucosamine mutase.